The primary structure comprises 180 residues: Crossover junction endodeoxyribonuclease RuvC (180 aa).

Active-site residues include aspartate 7, glutamate 66, and aspartate 138. 3 residues coordinate Mg(2+): aspartate 7, glutamate 66, and aspartate 138.

This sequence belongs to the RuvC family. As to quaternary structure, homodimer which binds Holliday junction (HJ) DNA. The HJ becomes 2-fold symmetrical on binding to RuvC with unstacked arms; it has a different conformation from HJ DNA in complex with RuvA. In the full resolvosome a probable DNA-RuvA(4)-RuvB(12)-RuvC(2) complex forms which resolves the HJ. Requires Mg(2+) as cofactor.

The protein resides in the cytoplasm. The catalysed reaction is Endonucleolytic cleavage at a junction such as a reciprocal single-stranded crossover between two homologous DNA duplexes (Holliday junction).. In terms of biological role, the RuvA-RuvB-RuvC complex processes Holliday junction (HJ) DNA during genetic recombination and DNA repair. Endonuclease that resolves HJ intermediates. Cleaves cruciform DNA by making single-stranded nicks across the HJ at symmetrical positions within the homologous arms, yielding a 5'-phosphate and a 3'-hydroxyl group; requires a central core of homology in the junction. The consensus cleavage sequence is 5'-(A/T)TT(C/G)-3'. Cleavage occurs on the 3'-side of the TT dinucleotide at the point of strand exchange. HJ branch migration catalyzed by RuvA-RuvB allows RuvC to scan DNA until it finds its consensus sequence, where it cleaves and resolves the cruciform DNA. In Burkholderia orbicola (strain MC0-3), this protein is Crossover junction endodeoxyribonuclease RuvC.